Reading from the N-terminus, the 109-residue chain is Large ribosomal subunit protein uL23 (109 aa).

The protein belongs to the universal ribosomal protein uL23 family. In terms of assembly, part of the 50S ribosomal subunit. Contacts protein L29, and trigger factor when it is bound to the ribosome.

Its function is as follows. One of the early assembly proteins it binds 23S rRNA. One of the proteins that surrounds the polypeptide exit tunnel on the outside of the ribosome. Forms the main docking site for trigger factor binding to the ribosome. This Prosthecochloris aestuarii (strain DSM 271 / SK 413) protein is Large ribosomal subunit protein uL23.